Consider the following 370-residue polypeptide: Histidinol-phosphate aminotransferase (370 aa).

K222 bears the N6-(pyridoxal phosphate)lysine mark.

The protein belongs to the class-II pyridoxal-phosphate-dependent aminotransferase family. Histidinol-phosphate aminotransferase subfamily. In terms of assembly, homodimer. Requires pyridoxal 5'-phosphate as cofactor.

It carries out the reaction L-histidinol phosphate + 2-oxoglutarate = 3-(imidazol-4-yl)-2-oxopropyl phosphate + L-glutamate. The protein operates within amino-acid biosynthesis; L-histidine biosynthesis; L-histidine from 5-phospho-alpha-D-ribose 1-diphosphate: step 7/9. This Bacillus cytotoxicus (strain DSM 22905 / CIP 110041 / 391-98 / NVH 391-98) protein is Histidinol-phosphate aminotransferase.